Here is a 660-residue protein sequence, read N- to C-terminus: Arginine--tRNA ligase, cytoplasmic (660 aa).

Met-1 carries the N-acetylmethionine modification. Residues 1–72 are could be involved in the assembly of the multisynthetase complex; sequence MDVLVSECSA…QAERNKPTKN (72 aa). L-arginine contacts are provided by residues 200–202, His-211, Tyr-384, Asp-388, and Gln-412; that span reads SPN. Positions 201 to 212 match the 'HIGH' region motif; sequence PNIAKEMHVGHL. The segment at 529 to 543 is interaction with tRNA; it reads NTAAYLLYAFTRIRS.

The protein belongs to the class-I aminoacyl-tRNA synthetase family. In terms of assembly, interacts (via N-terminus) with AIMP1 (via N-terminus); this stimulates its catalytic activity. Interacts (via N-terminus) with LARS2 (via C-terminus). Monomer. Part of a multisubunit complex that groups tRNA ligases for Arg (RARS1), Asp (DARS1), Gln (QARS1), Ile (IARS1), Leu (LARS1), Lys (KARS1), Met (MARS1) the bifunctional ligase for Glu and Pro (EPRS1) and the auxiliary subunits AIMP1/p43, AIMP2/p38 and EEF1E1/p18. Interacts with QARS1. Part of a complex composed of RARS1, QARS1 and AIMP1.

The protein resides in the cytoplasm. It localises to the cytosol. The catalysed reaction is tRNA(Arg) + L-arginine + ATP = L-arginyl-tRNA(Arg) + AMP + diphosphate. Functionally, forms part of a macromolecular complex that catalyzes the attachment of specific amino acids to cognate tRNAs during protein synthesis. Modulates the secretion of AIMP1 and may be involved in generation of the inflammatory cytokine EMAP2 from AIMP1. The chain is Arginine--tRNA ligase, cytoplasmic from Homo sapiens (Human).